The following is a 210-amino-acid chain: Ribonuclease HII (210 aa).

The region spanning 17-206 (DIICGVDEAG…VRALLGGVTP (190 aa)) is the RNase H type-2 domain. A divalent metal cation is bound by residues Asp23, Glu24, and Asp115.

This sequence belongs to the RNase HII family. Requires Mn(2+) as cofactor. Mg(2+) is required as a cofactor.

The protein localises to the cytoplasm. It catalyses the reaction Endonucleolytic cleavage to 5'-phosphomonoester.. In terms of biological role, endonuclease that specifically degrades the RNA of RNA-DNA hybrids. This chain is Ribonuclease HII, found in Janthinobacterium sp. (strain Marseille) (Minibacterium massiliensis).